We begin with the raw amino-acid sequence, 198 residues long: HTH-type transcriptional regulator BetI (198 aa).

In terms of domain architecture, HTH tetR-type spans 8 to 68; the sequence is PIRRQQLIEA…ATMRYLIRHL (61 aa). The segment at residues 31 to 50 is a DNA-binding region (H-T-H motif); the sequence is SIAQIAKRAGVSNGIISHYF.

It participates in amine and polyamine biosynthesis; betaine biosynthesis via choline pathway [regulation]. Functionally, repressor involved in the biosynthesis of the osmoprotectant glycine betaine. It represses transcription of the choline transporter BetT and the genes of BetAB involved in the synthesis of glycine betaine. The sequence is that of HTH-type transcriptional regulator BetI from Yersinia pseudotuberculosis serotype O:1b (strain IP 31758).